Here is a 167-residue protein sequence, read N- to C-terminus: Golgin subfamily A member 7B (167 aa).

Residues Cys78 and Cys81 are each lipidated (S-palmitoyl cysteine). A disordered region spans residues 140-167; sequence RCSSGSSSSGSSSGSGSSSAGGGGAGAR. The span at 142–157 shows a compositional bias: low complexity; sequence SSGSSSSGSSSGSGSS. Gly residues predominate over residues 158–167; that stretch reads SAGGGGAGAR.

The protein belongs to the ERF4 family. In terms of processing, palmitoylated by ZDHHC5. Palmitoylation is required for the maintenance of ZDHHC5 at the plasma membrane.

The protein localises to the cell membrane. It localises to the golgi apparatus membrane. In terms of biological role, play a role in cell adhesion by regulating the plasma membrane localization of the palmitoyltransferase ZDHHC5. May be involved in protein transport from Golgi to cell surface. In Mus musculus (Mouse), this protein is Golgin subfamily A member 7B (GOLGA7B).